Reading from the N-terminus, the 101-residue chain is Small ribosomal subunit protein uS14 (101 aa).

It belongs to the universal ribosomal protein uS14 family. Part of the 30S ribosomal subunit. Contacts proteins S3 and S10.

Binds 16S rRNA, required for the assembly of 30S particles and may also be responsible for determining the conformation of the 16S rRNA at the A site. This chain is Small ribosomal subunit protein uS14, found in Ectopseudomonas mendocina (strain ymp) (Pseudomonas mendocina).